The sequence spans 20 residues: Protein PR-L2 (20 aa).

Positions 1-20 (SVFAFENEQSSTIAPARLYK) are disordered.

Belongs to the BetVI family.

The sequence is that of Protein PR-L2 from Lupinus luteus (European yellow lupine).